Consider the following 112-residue polypeptide: Macrodomain Ori protein (112 aa).

The tract at residues 91–112 is disordered; it reads FHTLSGGKPQVEGAEDYTDSDD. Residues 103–112 are compositionally biased toward acidic residues; it reads GAEDYTDSDD.

The protein belongs to the MaoP family.

Functionally, involved in the organization of the Ori region of the chromosome into a macrodomain (MD). It constrains DNA mobility in the Ori macrodomain and limits long-distance DNA interactions with other chromosomal regions. This is Macrodomain Ori protein from Escherichia coli O157:H7.